The following is a 321-amino-acid chain: Tetraacyldisaccharide 4'-kinase (321 aa).

Residue 54 to 61 coordinates ATP; it reads SVGGTGKT.

This sequence belongs to the LpxK family.

It carries out the reaction a lipid A disaccharide + ATP = a lipid IVA + ADP + H(+). It participates in glycolipid biosynthesis; lipid IV(A) biosynthesis; lipid IV(A) from (3R)-3-hydroxytetradecanoyl-[acyl-carrier-protein] and UDP-N-acetyl-alpha-D-glucosamine: step 6/6. In terms of biological role, transfers the gamma-phosphate of ATP to the 4'-position of a tetraacyldisaccharide 1-phosphate intermediate (termed DS-1-P) to form tetraacyldisaccharide 1,4'-bis-phosphate (lipid IVA). The polypeptide is Tetraacyldisaccharide 4'-kinase (Rickettsia peacockii (strain Rustic)).